The primary structure comprises 93 residues: Small ribosomal subunit protein uS19c (93 aa).

It belongs to the universal ribosomal protein uS19 family.

The protein resides in the plastid. Its subcellular location is the chloroplast. Its function is as follows. Protein S19 forms a complex with S13 that binds strongly to the 16S ribosomal RNA. This Zygnema circumcarinatum (Green alga) protein is Small ribosomal subunit protein uS19c.